The chain runs to 287 residues: Ribosomal RNA small subunit methyltransferase I (287 aa).

It belongs to the methyltransferase superfamily. RsmI family.

Its subcellular location is the cytoplasm. It carries out the reaction cytidine(1402) in 16S rRNA + S-adenosyl-L-methionine = 2'-O-methylcytidine(1402) in 16S rRNA + S-adenosyl-L-homocysteine + H(+). Its function is as follows. Catalyzes the 2'-O-methylation of the ribose of cytidine 1402 (C1402) in 16S rRNA. This chain is Ribosomal RNA small subunit methyltransferase I, found in Streptococcus pyogenes serotype M3 (strain ATCC BAA-595 / MGAS315).